We begin with the raw amino-acid sequence, 98 residues long: Small ribosomal subunit protein uS19c (98 aa).

The protein belongs to the universal ribosomal protein uS19 family.

The protein resides in the plastid. The protein localises to the chloroplast. Protein S19 forms a complex with S13 that binds strongly to the 16S ribosomal RNA. The sequence is that of Small ribosomal subunit protein uS19c from Jasminum nudiflorum (Winter jasmine).